Here is a 327-residue protein sequence, read N- to C-terminus: NADPH-dependent aldose reductase GRE3 (327 aa).

Residue Tyr-49 is the Proton donor of the active site. A substrate-binding site is contributed by His-111. 219 to 286 (SSFGPQSFIE…SSKKERLLGN (68 aa)) contributes to the NADP(+) binding site.

Belongs to the aldo/keto reductase family. In terms of assembly, monomer.

The protein localises to the cytoplasm. It localises to the nucleus. The enzyme catalyses an alditol + NAD(+) = an aldose + NADH + H(+). The catalysed reaction is an alditol + NADP(+) = an aldose + NADPH + H(+). Aldose reductase with a broad substrate specificity. Reduces the cytotoxic compound methylglyoxal (MG) to acetol and (R)-lactaldehyde under stress conditions. MG is synthesized via a bypath of glycolysis from dihydroxyacetone phosphate and is believed to play a role in cell cycle regulation and stress adaptation. In pentose-fermenting yeasts, aldose reductase catalyzes the reduction of xylose into xylitol. The purified enzyme catalyzes this reaction, but the inability of S.cerevisiae to grow on xylose as sole carbon source indicates that the physiological function is more likely methylglyoxal reduction. The polypeptide is NADPH-dependent aldose reductase GRE3 (Saccharomyces cerevisiae (strain ATCC 204508 / S288c) (Baker's yeast)).